The chain runs to 76 residues: MLGRLIKDTTQFVKSSTKFGIVWGPKLAPWGITLGLGAFYFFQPKFLFKPLPIIGSNYLTQKDLDKMKKEAAENSQ.

Residues G20 to F42 traverse the membrane as a helical segment.

Its subcellular location is the membrane. This is an uncharacterized protein from Dictyostelium discoideum (Social amoeba).